Consider the following 395-residue polypeptide: Glutamate N-acetyltransferase (395 aa).

Positions 146, 169, 180, 263, 390, and 395 each coordinate substrate. Thr-180 (nucleophile) is an active-site residue.

It belongs to the ArgJ family. In terms of assembly, heterotetramer of two alpha and two beta chains.

It localises to the cytoplasm. The catalysed reaction is N(2)-acetyl-L-ornithine + L-glutamate = N-acetyl-L-glutamate + L-ornithine. It participates in amino-acid biosynthesis; L-arginine biosynthesis; L-ornithine and N-acetyl-L-glutamate from L-glutamate and N(2)-acetyl-L-ornithine (cyclic): step 1/1. Its function is as follows. Catalyzes the transfer of the acetyl group from N(2)-acetylornithine to glutamate, forming N-acetylglutamate and L-ornithine. The protein is Glutamate N-acetyltransferase of Methanosarcina acetivorans (strain ATCC 35395 / DSM 2834 / JCM 12185 / C2A).